A 721-amino-acid polypeptide reads, in one-letter code: K(+)-insensitive pyrophosphate-energized proton pump (721 aa).

5 consecutive transmembrane segments (helical) span residues 8 to 28 (LLGVILGISGVIYAVYLAVWV), 57 to 77 (YRTLAVLLVILAVLILVAIDM), 82 to 102 (FGLTALAFIVGALGSMLAGYL), 136 to 156 (VMGLSLASIALLLISGFYLVF), and 168 to 188 (LVALGFGASLVTLFMRVGGGI). Substrate is bound at residue K191. D194, D198, N221, and D224 together coordinate Mg(2+). 5 helical membrane passes run 247-267 (AIFLAAILGLPTQFIEAIILF), 294-314 (ISLAIYATIGLSVVLFFIGAF), 323-343 (ALALAATTSLGAVIAPLIVKI), 374-394 (YGVGLMSAIPVIAVIVAVLGI), and 416-436 (AGIFGTAMASVGLLVVAGIII). Position 446 (D446) interacts with Mg(2+). A run of 4 helical transmembrane segments spans residues 483–503 (AIASAALAALVLFIALIFEIV), 527–547 (LINANVLIGAFLGVALVYFFS), 599–619 (FLIPGLAAIVLPLITGLLLGW), and 621–641 (ALAGLIMGAIVAGVPRALLMA). The Ca(2+) site is built by D648, D672, and D676. K679 contributes to the substrate binding site. Residues 698 to 718 (VVFTYVIVSTNIALGIWPSGL) traverse the membrane as a helical segment.

Belongs to the H(+)-translocating pyrophosphatase (TC 3.A.10) family. K(+)-insensitive subfamily. In terms of assembly, homodimer. The cofactor is Mg(2+).

It is found in the cell membrane. The enzyme catalyses diphosphate + H2O + H(+)(in) = 2 phosphate + 2 H(+)(out). Its function is as follows. Proton pump that utilizes the energy of pyrophosphate hydrolysis as the driving force for proton movement across the membrane. Generates a proton motive force. The sequence is that of K(+)-insensitive pyrophosphate-energized proton pump from Pyrobaculum aerophilum (strain ATCC 51768 / DSM 7523 / JCM 9630 / CIP 104966 / NBRC 100827 / IM2).